A 493-amino-acid chain; its full sequence is Cobyric acid synthase (493 aa).

Residues 260-427 (RLSVAAIRLP…RHGYLQDDPA (168 aa)) enclose the GATase cobBQ-type domain. The active site involves H419.

It belongs to the CobB/CobQ family. CobQ subfamily.

It participates in cofactor biosynthesis; adenosylcobalamin biosynthesis. Its function is as follows. Catalyzes amidations at positions B, D, E, and G on adenosylcobyrinic A,C-diamide. NH(2) groups are provided by glutamine, and one molecule of ATP is hydrogenolyzed for each amidation. This Corynebacterium efficiens (strain DSM 44549 / YS-314 / AJ 12310 / JCM 11189 / NBRC 100395) protein is Cobyric acid synthase.